The following is a 101-amino-acid chain: Conopressin/conophysin, isoform 3 (101 aa).

A signal peptide is located at residue Ala1. A disulfide bridge connects residues Cys2 and Cys7. Gly10 carries the post-translational modification Glycine amide. Residues 11–18 (GKRNVDEG) constitute a propeptide that is removed on maturation. Intrachain disulfides connect Cys23/Cys63, Cys26/Cys37, Cys31/Cys53, Cys38/Cys43, Cys70/Cys88, Cys82/Cys100, and Cys89/Cys94.

The protein belongs to the vasopressin/oxytocin family. In terms of tissue distribution, expressed by the venom gland.

The protein resides in the secreted. Targets vasopressin-oxytocin related receptors. Is more active on fish receptors than on their human counterparts, supporting an evolved role of this conopressin in the envenomation process. Acts as an agonist on zebrafish vasopressin receptors V1a1R (EC(50)=10.6 nM), V1a2R (EC(50)=44.06 nM, partial agonist), V2R (EC(50)=299.2 nM) and oxytocin receptor (EC(50)=353.73 nM, partial agonist). Shows a weaker activity on human receptors AVPR1B (EC(50)=51.92 nM), AVPR1A (EC(50)=123.78 nM), AVPR2 (EC(50)=299.2 nM) and oxytocin (OXTR) receptor (EC(50)=455.66 nM, partial agonist). In vivo, exhibits grooming and scratching behavior in mice, following intracerebral injection. This is Conopressin/conophysin, isoform 3 from Conus monile (Necklace cone).